Here is a 512-residue protein sequence, read N- to C-terminus: Glutamyl-tRNA(Gln) amidotransferase subunit A (512 aa).

Residues lysine 82 and serine 157 each act as charge relay system in the active site. The active-site Acyl-ester intermediate is serine 181.

It belongs to the amidase family. GatA subfamily. As to quaternary structure, heterotrimer of A, B and C subunits.

The enzyme catalyses L-glutamyl-tRNA(Gln) + L-glutamine + ATP + H2O = L-glutaminyl-tRNA(Gln) + L-glutamate + ADP + phosphate + H(+). Its function is as follows. Allows the formation of correctly charged Gln-tRNA(Gln) through the transamidation of misacylated Glu-tRNA(Gln) in organisms which lack glutaminyl-tRNA synthetase. The reaction takes place in the presence of glutamine and ATP through an activated gamma-phospho-Glu-tRNA(Gln). This chain is Glutamyl-tRNA(Gln) amidotransferase subunit A, found in Bordetella petrii (strain ATCC BAA-461 / DSM 12804 / CCUG 43448).